A 273-amino-acid polypeptide reads, in one-letter code: NAD(P)H-hydrate epimerase (273 aa).

A YjeF N-terminal domain is found at 52–260; sequence AQQIDQELFN…GIIQKYELNL (209 aa). Position 105 to 109 (105 to 109) interacts with (6S)-NADPHX; sequence NNGGD. K(+) contacts are provided by Asn106 and Asp170. Residues 174-180 and Asp203 contribute to the (6S)-NADPHX site; that span reads GFSFKGE. Ser206 lines the K(+) pocket.

This sequence belongs to the NnrE/AIBP family. K(+) is required as a cofactor.

It catalyses the reaction (6R)-NADHX = (6S)-NADHX. The catalysed reaction is (6R)-NADPHX = (6S)-NADPHX. In terms of biological role, catalyzes the epimerization of the S- and R-forms of NAD(P)HX, a damaged form of NAD(P)H that is a result of enzymatic or heat-dependent hydration. This is a prerequisite for the S-specific NAD(P)H-hydrate dehydratase to allow the repair of both epimers of NAD(P)HX. In Branchiostoma floridae (Florida lancelet), this protein is NAD(P)H-hydrate epimerase.